An 874-amino-acid polypeptide reads, in one-letter code: Leucine--tRNA ligase (874 aa).

The short motif at 47-57 (PYPSGKLHMGH) is the 'HIGH' region element. Residues 636–640 (KMSKS) carry the 'KMSKS' region motif. Lys-639 provides a ligand contact to ATP.

Belongs to the class-I aminoacyl-tRNA synthetase family.

The protein localises to the cytoplasm. It carries out the reaction tRNA(Leu) + L-leucine + ATP = L-leucyl-tRNA(Leu) + AMP + diphosphate. The polypeptide is Leucine--tRNA ligase (Acinetobacter baumannii (strain AB0057)).